The chain runs to 316 residues: Transaldolase (316 aa).

K132 (schiff-base intermediate with substrate) is an active-site residue.

This sequence belongs to the transaldolase family. Type 1 subfamily. In terms of assembly, homodimer.

It localises to the cytoplasm. It carries out the reaction D-sedoheptulose 7-phosphate + D-glyceraldehyde 3-phosphate = D-erythrose 4-phosphate + beta-D-fructose 6-phosphate. It functions in the pathway carbohydrate degradation; pentose phosphate pathway; D-glyceraldehyde 3-phosphate and beta-D-fructose 6-phosphate from D-ribose 5-phosphate and D-xylulose 5-phosphate (non-oxidative stage): step 2/3. Its function is as follows. Transaldolase is important for the balance of metabolites in the pentose-phosphate pathway. The sequence is that of Transaldolase from Methylobacillus flagellatus (strain ATCC 51484 / DSM 6875 / VKM B-1610 / KT).